We begin with the raw amino-acid sequence, 309 residues long: MNRLQVELPGLSLKNPIIPASGCFGFGREYAQFYDLSVLGSIMIKATTEQPRYGNPTPRVAETPGGMLNAIGLQNPGLDKVMNSELPWLEQFDLPIIANVAGSQAEDYVAVAKEISKAPNVHALELNISCPNVKTGGIAFGTNPEIAADLTKRVKEVSEVPVYVKLSPNVANIVEIAKAIETAGADGLTMINTLLGMRLDLKTAKPILANRTGGLSGPAIKPVAIRMVHEVSQAVNIPIIGMGGIETAEDVIEFFYAGASAVAVGTANFIDPFVCPTIIEELPALLDELGFDHISECQGRSWKQTCHSR.

FMN contacts are provided by residues Ser-21 and Lys-45 to Ala-46. Substrate-binding positions include Lys-45 and Asn-69–Leu-73. FMN is bound by residues Asn-99 and Asn-127. Asn-127 serves as a coordination point for substrate. The active-site Nucleophile is the Cys-130. FMN is bound by residues Lys-165 and Ile-191. Asn-192–Thr-193 provides a ligand contact to substrate. Residues Gly-217, Gly-243–Gly-244, and Gly-265–Thr-266 each bind FMN.

It belongs to the dihydroorotate dehydrogenase family. Type 1 subfamily. In terms of assembly, heterotetramer of 2 PyrK and 2 PyrD type B subunits. It depends on FMN as a cofactor.

It is found in the cytoplasm. It catalyses the reaction (S)-dihydroorotate + NAD(+) = orotate + NADH + H(+). Its pathway is pyrimidine metabolism; UMP biosynthesis via de novo pathway; orotate from (S)-dihydroorotate (NAD(+) route): step 1/1. Functionally, catalyzes the conversion of dihydroorotate to orotate with NAD(+) as electron acceptor. The sequence is that of Dihydroorotate dehydrogenase B (NAD(+)), catalytic subunit (pyrD) from Bacillus cereus (strain B4264).